The primary structure comprises 340 residues: DNA polymerase III subunit delta' (340 aa).

As to quaternary structure, the DNA polymerase holoenzyme is a complex that contains 10 different types of subunits. These subunits are organized into 3 functionally essential subassemblies: the pol III core, the beta sliding clamp processivity factor and the clamp-loading complex. The pol III core (subunits alpha,epsilon and theta) contains the polymerase and the 3'-5' exonuclease proofreading activities. The polymerase is tethered to the template via the sliding clamp processivity factor. The clamp-loading complex assembles the beta processivity factor onto the primer template and plays a central role in the organization and communication at the replication fork. This complex contains delta, delta', psi and chi, and copies of either or both of two different DnaX proteins, gamma and tau. The composition of the holoenzyme is, therefore: (alpha,epsilon,theta)[2]-(gamma/tau)[3]-delta,delta', psi,chi-beta[4].

It catalyses the reaction DNA(n) + a 2'-deoxyribonucleoside 5'-triphosphate = DNA(n+1) + diphosphate. Functionally, DNA polymerase III is a complex, multichain enzyme responsible for most of the replicative synthesis in bacteria. This DNA polymerase also exhibits 3' to 5' exonuclease activity. This chain is DNA polymerase III subunit delta' (holB), found in Yersinia pestis.